The chain runs to 879 residues: Beta-mannosidase (879 aa).

The signal sequence occupies residues 1–17 (MLLRLLLLLAPCGAGFA). Asparagine 35 and asparagine 77 each carry an N-linked (GlcNAc...) asparagine glycan. Cysteine 167 and cysteine 176 form a disulfide bridge. A substrate-binding site is contributed by 190 to 192 (WDW). Asparagine 297 and asparagine 302 each carry an N-linked (GlcNAc...) asparagine glycan. Asparagine 456 contacts substrate. Glutamate 457 acts as the Proton donor in catalysis. 3 cysteine pairs are disulfide-bonded: cysteine 540-cysteine 629, cysteine 732-cysteine 761, and cysteine 764-cysteine 769. The active-site Nucleophile is the glutamate 554. A glycan (N-linked (GlcNAc...) asparagine) is linked at asparagine 607. N-linked (GlcNAc...) asparagine glycosylation occurs at asparagine 803.

Belongs to the glycosyl hydrolase 2 family. Monomer. Post-translationally, the N-terminus is blocked. N-glycosylated. In terms of tissue distribution, detected in kidney (at protein level). Highest expression is found in thyroid tissue. The amount of transcript is significantly higher in normal tissues than in tissues affected by the disease.

It is found in the lysosome. It carries out the reaction Hydrolysis of terminal, non-reducing beta-D-mannose residues in beta-D-mannosides.. It participates in glycan metabolism; N-glycan degradation. Exoglycosidase that cleaves the single beta-linked mannose residue from the non-reducing end of all N-linked glycoprotein oligosaccharides. The polypeptide is Beta-mannosidase (MANBA) (Bos taurus (Bovine)).